A 290-amino-acid polypeptide reads, in one-letter code: 33 kDa chaperonin (290 aa).

Cystine bridges form between Cys-235/Cys-237 and Cys-268/Cys-271.

Belongs to the HSP33 family. Under oxidizing conditions two disulfide bonds are formed involving the reactive cysteines. Under reducing conditions zinc is bound to the reactive cysteines and the protein is inactive.

It is found in the cytoplasm. Redox regulated molecular chaperone. Protects both thermally unfolding and oxidatively damaged proteins from irreversible aggregation. Plays an important role in the bacterial defense system toward oxidative stress. In Streptococcus uberis (strain ATCC BAA-854 / 0140J), this protein is 33 kDa chaperonin.